A 169-amino-acid polypeptide reads, in one-letter code: Ribosome maturation factor RimM (169 aa).

The PRC barrel domain maps to 97 to 169 (EDEYYWTDLV…TITADWGLDY (73 aa)).

This sequence belongs to the RimM family. In terms of assembly, binds ribosomal protein uS19.

It is found in the cytoplasm. An accessory protein needed during the final step in the assembly of 30S ribosomal subunit, possibly for assembly of the head region. Essential for efficient processing of 16S rRNA. May be needed both before and after RbfA during the maturation of 16S rRNA. It has affinity for free ribosomal 30S subunits but not for 70S ribosomes. The polypeptide is Ribosome maturation factor RimM (Neisseria meningitidis serogroup B (strain ATCC BAA-335 / MC58)).